Reading from the N-terminus, the 652-residue chain is Acetyl-coenzyme A synthetase (652 aa).

Residues 191–194, Thr-311, and Asn-335 each bind CoA; that span reads RAGR. Residues 387 to 389, 411 to 416, Asp-500, and Arg-515 contribute to the ATP site; these read GEP and DTWWQT. Residue Ser-523 coordinates CoA. Arg-526 lines the ATP pocket. Mg(2+) is bound by residues Val-537, His-539, and Ile-542. Arg-584 lines the CoA pocket. The residue at position 609 (Lys-609) is an N6-acetyllysine.

This sequence belongs to the ATP-dependent AMP-binding enzyme family. Mg(2+) is required as a cofactor. Acetylated. Deacetylation by the SIR2-homolog deacetylase activates the enzyme.

The catalysed reaction is acetate + ATP + CoA = acetyl-CoA + AMP + diphosphate. Catalyzes the conversion of acetate into acetyl-CoA (AcCoA), an essential intermediate at the junction of anabolic and catabolic pathways. Acs undergoes a two-step reaction. In the first half reaction, Acs combines acetate with ATP to form acetyl-adenylate (AcAMP) intermediate. In the second half reaction, it can then transfer the acetyl group from AcAMP to the sulfhydryl group of CoA, forming the product AcCoA. Functionally, enables the cell to use acetate during aerobic growth to generate energy via the TCA cycle, and biosynthetic compounds via the glyoxylate shunt. Acetylates CheY, the response regulator involved in flagellar movement and chemotaxis. This is Acetyl-coenzyme A synthetase from Escherichia coli O157:H7.